The sequence spans 770 residues: Arf-GAP with coiled-coil, ANK repeat and PH domain-containing protein 2 (770 aa).

Residues 6–226 enclose the BAR domain; that stretch reads DFEECLKDSP…MKDLGAQLDR (221 aa). The PH domain maps to 266–361; that stretch reads GIVMEGYLFK…WIKAVQTSIA (96 aa). The segment at 371-392 is disordered; it reads SEKLDKKSSPSTGSLDSGSESK. The segment covering 379–388 has biased composition (low complexity); sequence SPSTGSLDSG. Residues Ser384 and Ser387 each carry the phosphoserine modification. The region spanning 399 to 520 is the Arf-GAP domain; sequence ESALQRVQCI…KFVDKYSTLL (122 aa). The C4-type zinc-finger motif lies at 414-437; sequence CCDCGLADPRWASINLGITLCIEC. The residue at position 521 (Ser521) is a Phosphoserine. Over residues 548–561 the composition is skewed to polar residues; it reads TPVKSNDSGIQQCS. Residues 548–571 are disordered; that stretch reads TPVKSNDSGIQQCSDDGRESLPST. 2 positions are modified to phosphoserine: Ser573 and Ser576. ANK repeat units follow at residues 632 to 661, 665 to 694, and 698 to 727; these read NQAT…NVNQ, QGRG…NQHA, and EGKD…NEEM. Position 734 is a phosphotyrosine (Tyr734). Ser767 bears the Phosphoserine mark.

In terms of assembly, interacts with RAB35 (GTP-bound form); the interaction is direct and probably recruits ACAP2 to membranes. Interacts with MICALL1; the interaction is indirect through RAB35.

The protein resides in the endosome membrane. The protein localises to the cell membrane. With respect to regulation, GAP activity stimulated by phosphatidylinositol 4,5-bisphosphate (PIP2) and phosphatidic acid. In terms of biological role, GTPase-activating protein (GAP) for ADP ribosylation factor 6 (ARF6). Doesn't show GAP activity for RAB35. This is Arf-GAP with coiled-coil, ANK repeat and PH domain-containing protein 2 (Acap2) from Rattus norvegicus (Rat).